Consider the following 217-residue polypeptide: Pyridoxine/pyridoxamine 5'-phosphate oxidase (217 aa).

Substrate is bound by residues 13 to 16 and Lys-71; that span reads RREY. FMN-binding positions include 66-71, 81-82, Arg-87, Lys-88, and Gln-110; these read RTVLLK and YT. Residues Tyr-128, Arg-132, and Ser-136 each contribute to the substrate site. Residues 145–146 and Trp-190 each bind FMN; that span reads QS. 196–198 lines the substrate pocket; that stretch reads RLH. An FMN-binding site is contributed by Arg-200.

Belongs to the pyridoxamine 5'-phosphate oxidase family. In terms of assembly, homodimer. FMN is required as a cofactor.

The catalysed reaction is pyridoxamine 5'-phosphate + O2 + H2O = pyridoxal 5'-phosphate + H2O2 + NH4(+). It catalyses the reaction pyridoxine 5'-phosphate + O2 = pyridoxal 5'-phosphate + H2O2. It functions in the pathway cofactor metabolism; pyridoxal 5'-phosphate salvage; pyridoxal 5'-phosphate from pyridoxamine 5'-phosphate: step 1/1. It participates in cofactor metabolism; pyridoxal 5'-phosphate salvage; pyridoxal 5'-phosphate from pyridoxine 5'-phosphate: step 1/1. In terms of biological role, catalyzes the oxidation of either pyridoxine 5'-phosphate (PNP) or pyridoxamine 5'-phosphate (PMP) into pyridoxal 5'-phosphate (PLP). In Rubrobacter xylanophilus (strain DSM 9941 / JCM 11954 / NBRC 16129 / PRD-1), this protein is Pyridoxine/pyridoxamine 5'-phosphate oxidase.